Here is a 435-residue protein sequence, read N- to C-terminus: GTPase Der (435 aa).

2 consecutive EngA-type G domains span residues 3–167 (NIVA…KDEG) and 176–351 (PRIA…ENRG). GTP contacts are provided by residues 9-16 (GRPNVGKS), 56-60 (DTGGY), 119-122 (NKSD), 182-189 (GRPNAGKS), 229-233 (DTAGI), and 294-297 (NKWD). The region spanning 352 to 435 (KRIPTSELND…VPISIVYRKK (84 aa)) is the KH-like domain.

The protein belongs to the TRAFAC class TrmE-Era-EngA-EngB-Septin-like GTPase superfamily. EngA (Der) GTPase family. In terms of assembly, associates with the 50S ribosomal subunit.

Its function is as follows. GTPase that plays an essential role in the late steps of ribosome biogenesis. This chain is GTPase Der, found in Cytophaga hutchinsonii (strain ATCC 33406 / DSM 1761 / CIP 103989 / NBRC 15051 / NCIMB 9469 / D465).